Reading from the N-terminus, the 671-residue chain is Probable serine/threonine-protein kinase DDB_G0286627 (671 aa).

Residues 31–283 (WVIERQLSKG…SHQLIKHPFF (253 aa)) enclose the Protein kinase domain. ATP contacts are provided by residues 37-45 (LSKGSFGQV) and Lys-61. Asp-148 serves as the catalytic Proton acceptor. A helical transmembrane segment spans residues 369–389 (FKIIYLFLILLFLMTILVNLN). The segment at 410 to 523 (PESNPIKKPS…PPVTETPKPT (114 aa)) is disordered. Over residues 427–490 (NQYSEGSQSS…PTDSSTTDPP (64 aa)) the composition is skewed to low complexity. Pro residues predominate over residues 491 to 513 (VTDPPITDPPITDPPVTDPPITE).

It belongs to the protein kinase superfamily. STE Ser/Thr protein kinase family. Mg(2+) is required as a cofactor.

The protein resides in the membrane. It carries out the reaction L-seryl-[protein] + ATP = O-phospho-L-seryl-[protein] + ADP + H(+). The catalysed reaction is L-threonyl-[protein] + ATP = O-phospho-L-threonyl-[protein] + ADP + H(+). This is Probable serine/threonine-protein kinase DDB_G0286627 from Dictyostelium discoideum (Social amoeba).